Reading from the N-terminus, the 212-residue chain is ATP-dependent dethiobiotin synthetase BioD (212 aa).

13-18 (GIGKTV) lines the ATP pocket. Threonine 17 serves as a coordination point for Mg(2+). Residue lysine 33 is part of the active site. Serine 37 contacts substrate. Glutamate 100 is a binding site for Mg(2+). ATP-binding positions include 100–103 (EGAG) and 184–186 (PRL).

It belongs to the dethiobiotin synthetase family. As to quaternary structure, homodimer. Mg(2+) serves as cofactor.

The protein localises to the cytoplasm. It carries out the reaction (7R,8S)-7,8-diammoniononanoate + CO2 + ATP = (4R,5S)-dethiobiotin + ADP + phosphate + 3 H(+). The protein operates within cofactor biosynthesis; biotin biosynthesis; biotin from 7,8-diaminononanoate: step 1/2. Functionally, catalyzes a mechanistically unusual reaction, the ATP-dependent insertion of CO2 between the N7 and N8 nitrogen atoms of 7,8-diaminopelargonic acid (DAPA, also called 7,8-diammoniononanoate) to form a ureido ring. The protein is ATP-dependent dethiobiotin synthetase BioD of Rhodopseudomonas palustris (strain ATCC BAA-98 / CGA009).